Reading from the N-terminus, the 310-residue chain is Acetaldehyde dehydrogenase 1 (310 aa).

Residue 12-15 (SGNI) coordinates NAD(+). Catalysis depends on C127, which acts as the Acyl-thioester intermediate. NAD(+) is bound by residues 163 to 171 (SAGPGTRAN) and N282.

Belongs to the acetaldehyde dehydrogenase family.

It catalyses the reaction acetaldehyde + NAD(+) + CoA = acetyl-CoA + NADH + H(+). In Mycobacterium sp. (strain KMS), this protein is Acetaldehyde dehydrogenase 1.